A 291-amino-acid chain; its full sequence is m-AAA protease-interacting protein 1, mitochondrial (291 aa).

The transit peptide at 1–96 (MALAARLLPQ…SFPACPQRSY (96 aa)) directs the protein to the mitochondrion.

In terms of assembly, interacts with AFG3L2. Interacts with SPG7. Interacts with SMDT1/EMRE (via the N-terminal transit peptide); interaction is direct and takes place before maturation of SMDT1/EMRE.

It localises to the mitochondrion matrix. Its function is as follows. Promotes sorting of SMDT1/EMRE in mitochondria by ensuring its maturation. Interacts with the transit peptide region of SMDT1/EMRE precursor protein in the mitochondrial matrix, leading to protect it against protein degradation by YME1L1, thereby ensuring SMDT1/EMRE maturation by the mitochondrial processing peptidase (PMPCA and PMPCB). In Homo sapiens (Human), this protein is m-AAA protease-interacting protein 1, mitochondrial.